A 253-amino-acid chain; its full sequence is Tetraspanin-11 (253 aa).

3 helical membrane-spanning segments follow: residues 19-39, 63-83, and 93-113; these read LLFV…AVGI, ILIF…GAIL, and YFCL…LAHV. N-linked (GlcNAc...) asparagine glycosylation is present at N127. A helical transmembrane segment spans residues 220 to 240; it reads LLLMGAVGIGVACLQICGMVL.

Belongs to the tetraspanin (TM4SF) family.

The protein resides in the membrane. The polypeptide is Tetraspanin-11 (TSPAN11) (Homo sapiens (Human)).